A 273-amino-acid polypeptide reads, in one-letter code: Large ribosomal subunit protein uL2cz/uL2cy (273 aa).

Residues 224–273 (NPVDHPHGGGEGRAPIGRKKPATPWGYPALGRRSRKRNKYSDRFILRRRK) form a disordered region. Residues 262–273 (KYSDRFILRRRK) are compositionally biased toward basic and acidic residues.

This sequence belongs to the universal ribosomal protein uL2 family. In terms of assembly, part of the 50S ribosomal subunit.

It is found in the plastid. Its subcellular location is the chloroplast. The chain is Large ribosomal subunit protein uL2cz/uL2cy (rpl2-A) from Piper cenocladum (Ant piper).